A 566-amino-acid polypeptide reads, in one-letter code: Medium-chain fatty-acid--CoA ligase (566 aa).

An ATP-binding site is contributed by 231 to 242 (ILASERAYCARL).

Belongs to the ATP-dependent AMP-binding enzyme family. Homodimer. Mg(2+) is required as a cofactor.

It is found in the cell membrane. The catalysed reaction is hexanoate + ATP + CoA = hexanoyl-CoA + AMP + diphosphate. The enzyme catalyses octanoate + ATP + CoA = octanoyl-CoA + AMP + diphosphate. It catalyses the reaction dodecanoate + ATP + CoA = dodecanoyl-CoA + AMP + diphosphate. It participates in lipid metabolism; fatty acid beta-oxidation. In terms of biological role, catalyzes the esterification, concomitant with transport, of exogenous fatty acids into metabolically active CoA thioesters for subsequent degradation or incorporation into phospholipids. Is maximally active on C6:0, C8:0 and C12:0 fatty acids, while has a low activity on C14-C18 chain length fatty acids. Is involved in the anaerobic beta-oxidative degradation of fatty acids, which allows anaerobic growth of E.coli on fatty acids as a sole carbon and energy source in the presence of nitrate or fumarate as a terminal electron acceptor. Can functionally replace FadD under anaerobic conditions. The protein is Medium-chain fatty-acid--CoA ligase of Escherichia coli (strain K12).